A 152-amino-acid chain; its full sequence is Superoxide dismutase [Cu-Zn] (152 aa).

C7 carries the S-palmitoyl cysteine lipid modification. Cu cation is bound by residues H47, H49, and H64. Cysteines 58 and 146 form a disulfide. 4 residues coordinate Zn(2+): H64, H72, H81, and D84. A Cu cation-binding site is contributed by H120.

This sequence belongs to the Cu-Zn superoxide dismutase family. As to quaternary structure, homodimer. The cofactor is Cu cation. It depends on Zn(2+) as a cofactor.

The protein localises to the cytoplasm. It localises to the nucleus. It carries out the reaction 2 superoxide + 2 H(+) = H2O2 + O2. Destroys radicals which are normally produced within the cells and which are toxic to biological systems. In Xiphias gladius (Swordfish), this protein is Superoxide dismutase [Cu-Zn] (sod1).